The sequence spans 140 residues: Lysozyme c-1 (140 aa).

An N-terminal signal peptide occupies residues 1–20 (MKVFSTVLLAIVACCAVAEA). In terms of domain architecture, C-type lysozyme spans 21–140 (KTFGKCELAK…KKLPNVSSCF (120 aa)). 4 cysteine pairs are disulfide-bonded: C26-C139, C47-C128, C81-C94, and C90-C108. Residues E52 and D69 contribute to the active site.

This sequence belongs to the glycosyl hydrolase 22 family. In terms of tissue distribution, expressed in salivary glands and Malpighian tubules.

The catalysed reaction is Hydrolysis of (1-&gt;4)-beta-linkages between N-acetylmuramic acid and N-acetyl-D-glucosamine residues in a peptidoglycan and between N-acetyl-D-glucosamine residues in chitodextrins.. In terms of biological role, lysozymes have primarily a bacteriolytic function; those in tissues and body fluids are associated with the monocyte-macrophage system and enhance the activity of immunoagents. In Anopheles gambiae (African malaria mosquito), this protein is Lysozyme c-1.